An 824-amino-acid polypeptide reads, in one-letter code: Acyl-homoserine lactone acylase QuiP (824 aa).

Residues 1–26 (MASPALRHFLPRFGAAAAAASFLSLA) form the signal peptide. Ser-264 acts as the Nucleophile in catalysis.

The protein belongs to the peptidase S45 family. In terms of assembly, heterodimer of an alpha subunit and a beta subunit processed from the same precursor.

Its subcellular location is the periplasm. It carries out the reaction an N-acyl-L-homoserine lactone + H2O = L-homoserine lactone + a carboxylate. In terms of biological role, catalyzes the deacylation of acyl-homoserine lactone (AHL or acyl-HSL), releasing homoserine lactone (HSL) and the corresponding fatty acid. Possesses a specificity for the degradation of long-chain acyl-HSLs (side chains of seven or more carbons in length). This chain is Acyl-homoserine lactone acylase QuiP (quiP), found in Pseudomonas syringae pv. syringae (strain B728a).